The chain runs to 140 residues: Ribosome maturation factor RimP (140 aa).

It belongs to the RimP family.

It localises to the cytoplasm. In terms of biological role, required for maturation of 30S ribosomal subunits. This Campylobacter jejuni subsp. doylei (strain ATCC BAA-1458 / RM4099 / 269.97) protein is Ribosome maturation factor RimP.